The sequence spans 424 residues: Serine--tRNA ligase (424 aa).

233-235 is an L-serine binding site; the sequence is TAE. Residue 264-266 participates in ATP binding; it reads RKE. Glu-287 lines the L-serine pocket. 351 to 354 serves as a coordination point for ATP; it reads EISS. An L-serine-binding site is contributed by Ser-386.

It belongs to the class-II aminoacyl-tRNA synthetase family. Type-1 seryl-tRNA synthetase subfamily. Homodimer. The tRNA molecule binds across the dimer.

It localises to the cytoplasm. The catalysed reaction is tRNA(Ser) + L-serine + ATP = L-seryl-tRNA(Ser) + AMP + diphosphate + H(+). It catalyses the reaction tRNA(Sec) + L-serine + ATP = L-seryl-tRNA(Sec) + AMP + diphosphate + H(+). The protein operates within aminoacyl-tRNA biosynthesis; selenocysteinyl-tRNA(Sec) biosynthesis; L-seryl-tRNA(Sec) from L-serine and tRNA(Sec): step 1/1. Catalyzes the attachment of serine to tRNA(Ser). Is also able to aminoacylate tRNA(Sec) with serine, to form the misacylated tRNA L-seryl-tRNA(Sec), which will be further converted into selenocysteinyl-tRNA(Sec). The protein is Serine--tRNA ligase of Elusimicrobium minutum (strain Pei191).